The sequence spans 515 residues: Bifunctional purine biosynthesis protein PurH (515 aa).

Residues 1-145 enclose the MGS-like domain; that stretch reads MTKRVLISVS…KNHASVTVVV (145 aa).

It belongs to the PurH family.

It carries out the reaction (6R)-10-formyltetrahydrofolate + 5-amino-1-(5-phospho-beta-D-ribosyl)imidazole-4-carboxamide = 5-formamido-1-(5-phospho-D-ribosyl)imidazole-4-carboxamide + (6S)-5,6,7,8-tetrahydrofolate. The enzyme catalyses IMP + H2O = 5-formamido-1-(5-phospho-D-ribosyl)imidazole-4-carboxamide. Its pathway is purine metabolism; IMP biosynthesis via de novo pathway; 5-formamido-1-(5-phospho-D-ribosyl)imidazole-4-carboxamide from 5-amino-1-(5-phospho-D-ribosyl)imidazole-4-carboxamide (10-formyl THF route): step 1/1. The protein operates within purine metabolism; IMP biosynthesis via de novo pathway; IMP from 5-formamido-1-(5-phospho-D-ribosyl)imidazole-4-carboxamide: step 1/1. In Streptococcus pneumoniae (strain 70585), this protein is Bifunctional purine biosynthesis protein PurH.